The sequence spans 344 residues: Methionine import ATP-binding protein MetN (344 aa).

The 240-residue stretch at 2–241 folds into the ABC transporter domain; sequence IEIKSVNKVF…PKTELAHQFI (240 aa). Residue 38-45 coordinates ATP; sequence GSSGAGKS.

This sequence belongs to the ABC transporter superfamily. Methionine importer (TC 3.A.1.24) family. In terms of assembly, the complex is composed of two ATP-binding proteins (MetN), two transmembrane proteins (MetI) and a solute-binding protein (MetQ).

It localises to the cell inner membrane. The catalysed reaction is L-methionine(out) + ATP + H2O = L-methionine(in) + ADP + phosphate + H(+). It catalyses the reaction D-methionine(out) + ATP + H2O = D-methionine(in) + ADP + phosphate + H(+). Its function is as follows. Part of the ABC transporter complex MetNIQ involved in methionine import. Responsible for energy coupling to the transport system. This is Methionine import ATP-binding protein MetN from Vibrio cholerae serotype O1 (strain ATCC 39315 / El Tor Inaba N16961).